Reading from the N-terminus, the 255-residue chain is Uracil-DNA glycosylase (255 aa).

Asp-93 functions as the Proton acceptor in the catalytic mechanism.

It belongs to the uracil-DNA glycosylase (UDG) superfamily. UNG family.

The protein resides in the host nucleus. The catalysed reaction is Hydrolyzes single-stranded DNA or mismatched double-stranded DNA and polynucleotides, releasing free uracil.. Functionally, excises uracil residues from the DNA which can arise as a result of misincorporation of dUMP residues by DNA polymerase or deamination of cytosines. Therefore may reduce deleterious uracil incorporation into the viral genome, particularly in terminally differentiated cells which lack DNA repair enzymes. This is Uracil-DNA glycosylase (U81) from Human herpesvirus 6A (strain Uganda-1102) (HHV-6 variant A).